A 206-amino-acid polypeptide reads, in one-letter code: Ribosomal RNA small subunit methyltransferase G (206 aa).

Residues glycine 74, leucine 79, 125–126, and arginine 140 each bind S-adenosyl-L-methionine; that span reads VE.

This sequence belongs to the methyltransferase superfamily. RNA methyltransferase RsmG family.

It localises to the cytoplasm. The catalysed reaction is guanosine(527) in 16S rRNA + S-adenosyl-L-methionine = N(7)-methylguanosine(527) in 16S rRNA + S-adenosyl-L-homocysteine. Its function is as follows. Specifically methylates the N7 position of guanine in position 527 of 16S rRNA. In Shewanella oneidensis (strain ATCC 700550 / JCM 31522 / CIP 106686 / LMG 19005 / NCIMB 14063 / MR-1), this protein is Ribosomal RNA small subunit methyltransferase G.